The following is a 262-amino-acid chain: Adenosylcobinamide-GDP ribazoletransferase (262 aa).

Helical transmembrane passes span 37–57, 58–78, 112–132, 139–159, 183–203, 205–225, and 237–257; these read SMPLAGAAIGALAAGTYALCS, MFSFGTPLFLALFLLWLGIWL, VGAFAVLSLACLLSFRWLFLY, IPPALFVAIPLLSRSGAAWLL, AVWALVLAFLALSLLLVFGGV, VWTSAALAVAMALLALGAKPW, and VLGALIEGGETLLWGVVWLLH.

It belongs to the CobS family. Mg(2+) is required as a cofactor.

It localises to the cell membrane. It carries out the reaction alpha-ribazole + adenosylcob(III)inamide-GDP = adenosylcob(III)alamin + GMP + H(+). The enzyme catalyses alpha-ribazole 5'-phosphate + adenosylcob(III)inamide-GDP = adenosylcob(III)alamin 5'-phosphate + GMP + H(+). It participates in cofactor biosynthesis; adenosylcobalamin biosynthesis; adenosylcobalamin from cob(II)yrinate a,c-diamide: step 7/7. Functionally, joins adenosylcobinamide-GDP and alpha-ribazole to generate adenosylcobalamin (Ado-cobalamin). Also synthesizes adenosylcobalamin 5'-phosphate from adenosylcobinamide-GDP and alpha-ribazole 5'-phosphate. This is Adenosylcobinamide-GDP ribazoletransferase from Geobacillus thermodenitrificans (strain NG80-2).